The primary structure comprises 656 residues: Macrolide export ATP-binding/permease protein MacB (656 aa).

Residues 6–244 (LEVSACYRSF…AAPKTEVIPA (239 aa)) enclose the ABC transporter domain. Residue 42 to 49 (GASGSGKS) coordinates ATP. Transmembrane regions (helical) follow at residues 277–297 (FLTM…VALG), 531–551 (LLIS…VMNI), 586–606 (LVCL…GVVF), and 621–641 (SIVA…FLPA).

The protein belongs to the ABC transporter superfamily. Macrolide exporter (TC 3.A.1.122) family. Homodimer. Part of the tripartite efflux system MacAB-TolC, which is composed of an inner membrane transporter, MacB, a periplasmic membrane fusion protein, MacA, and an outer membrane component, TolC. The complex forms a large protein conduit and can translocate molecules across both the inner and outer membranes. Interacts with MacA.

It localises to the cell inner membrane. Functionally, part of the tripartite efflux system MacAB-TolC. MacB is a non-canonical ABC transporter that contains transmembrane domains (TMD), which form a pore in the inner membrane, and an ATP-binding domain (NBD), which is responsible for energy generation. Confers resistance against macrolides. In Shewanella sp. (strain ANA-3), this protein is Macrolide export ATP-binding/permease protein MacB.